A 503-amino-acid polypeptide reads, in one-letter code: 3-octaprenyl-4-hydroxybenzoate carboxy-lyase (503 aa).

Position 176 (N176) interacts with Mn(2+). Residues 179–181, 193–195, and 198–199 each bind prenylated FMN; these read IYR, RWL, and RG. E242 provides a ligand contact to Mn(2+). D303 functions as the Proton donor in the catalytic mechanism.

Belongs to the UbiD family. Homohexamer. Requires prenylated FMN as cofactor. It depends on Mn(2+) as a cofactor.

Its subcellular location is the cell membrane. It catalyses the reaction a 4-hydroxy-3-(all-trans-polyprenyl)benzoate + H(+) = a 2-(all-trans-polyprenyl)phenol + CO2. It participates in cofactor biosynthesis; ubiquinone biosynthesis. Its function is as follows. Catalyzes the decarboxylation of 3-octaprenyl-4-hydroxy benzoate to 2-octaprenylphenol, an intermediate step in ubiquinone biosynthesis. This chain is 3-octaprenyl-4-hydroxybenzoate carboxy-lyase, found in Ralstonia pickettii (strain 12J).